Reading from the N-terminus, the 32-residue chain is Beta-amanitin proprotein (32 aa).

A propeptide spanning residues 1-10 (MSDINATRLP) is cleaved from the precursor. A cross-link (cyclopeptide (Ile-Pro)) is located at residues 11–18 (IWGIGCDP). Residues 12–16 (WGIGC) constitute a cross-link (2'-cysteinyl-6'-hydroxytryptophan sulfoxide (Trp-Cys)). A propeptide spanning residues 19 to 32 (CIGDDVTILLTRGE) is cleaved from the precursor.

The protein belongs to the MSDIN fungal toxin family. Post-translationally, processed by the macrocyclase-peptidase enzyme POPB to yield a toxic cyclic decapeptide. POPB first removes 10 residues from the N-terminus. Conformational trapping of the remaining peptide forces the enzyme to release this intermediate rather than proceed to macrocyclization. The enzyme rebinds the remaining peptide in a different conformation and catalyzes macrocyclization of the N-terminal 8 residues.

Its function is as follows. Toxin belonging to the bicyclic octapeptides amatoxins that acts by binding non-competitively to RNA polymerase II and greatly slowing the elongation of transcripts from target promoters. This chain is Beta-amanitin proprotein, found in Amanita phalloides (Death cap).